The following is a 335-amino-acid chain: RVS161-like protein RVS162 (335 aa).

One can recognise a BAR domain in the interval 17–310; sequence VMLKTGHIEQ…LDAQTRQDYI (294 aa). Positions 30-56 form a coiled coil; that stretch reads KEYEFQEKRYRTMEENSIKLQKNLRLY. Residues 105–127 form a disordered region; the sequence is HEEEGEEKEEEENDNTTTTTTTT. The span at 107-118 shows a compositional bias: acidic residues; it reads EEGEEKEEEEND. Residues 222-259 are a coiled coil; it reads TNIIELNHNQYEEKLKIYNQELTEVESKYVEINNQLLI.

It localises to the cytoplasm. Its subcellular location is the cytoskeleton. Functionally, component of a cytoskeletal structure that is required for membrane curvature. The polypeptide is RVS161-like protein RVS162 (Candida albicans (strain SC5314 / ATCC MYA-2876) (Yeast)).